Here is a 282-residue protein sequence, read N- to C-terminus: ATP synthase subunit a (282 aa).

5 helical membrane passes run 45–65 (AIHV…LWLF), 106–126 (IAPL…MDLI), 160–179 (INAT…FYSI), 232–252 (LIFI…SVPW), and 253–273 (AIFH…LTIV).

It belongs to the ATPase A chain family. In terms of assembly, F-type ATPases have 2 components, CF(1) - the catalytic core - and CF(0) - the membrane proton channel. CF(1) has five subunits: alpha(3), beta(3), gamma(1), delta(1), epsilon(1). CF(0) has three main subunits: a(1), b(2) and c(9-12). The alpha and beta chains form an alternating ring which encloses part of the gamma chain. CF(1) is attached to CF(0) by a central stalk formed by the gamma and epsilon chains, while a peripheral stalk is formed by the delta and b chains.

It localises to the cell inner membrane. Functionally, key component of the proton channel; it plays a direct role in the translocation of protons across the membrane. This Marinomonas sp. (strain MWYL1) protein is ATP synthase subunit a.